A 338-amino-acid polypeptide reads, in one-letter code: Mitochondrial genome maintenance exonuclease 1 (338 aa).

A mitochondrion-targeting transit peptide spans 1 to 64; it reads MKLPLTFCRL…RSVLSRGPAQ (64 aa). Residues aspartate 235, aspartate 248, and lysine 250 contribute to the active site.

This sequence belongs to the MGME1 family.

The protein localises to the mitochondrion. Its function is as follows. Metal-dependent single-stranded DNA (ssDNA) exonuclease involved in mitochondrial genome maintenance. Has preference for 5'-3' exonuclease activity but is also capable of endonuclease activity on linear substrates. Necessary for maintenance of proper 7S DNA levels. Probably involved in mitochondrial DNA (mtDNA) repair, possibly via the processing of displaced DNA containing Okazaki fragments during RNA-primed DNA synthesis on the lagging strand or via processing of DNA flaps during long-patch base excision repair. Specifically binds 5-hydroxymethylcytosine (5hmC)-containing DNA in stem cells. The protein is Mitochondrial genome maintenance exonuclease 1 (Mgme1) of Mus musculus (Mouse).